Reading from the N-terminus, the 500-residue chain is Ferulic acid decarboxylase 1 (500 aa).

Positions 168, 191, and 233 each coordinate Mn(2+). Residues 168–173 (NWSIAR), 190–191 (QH), and Glu233 contribute to the prenylated FMN site. Residue Glu282 is the Proton donor of the active site. Residue Lys391 participates in prenylated FMN binding.

The protein belongs to the UbiD family. UbiD-like/FDC subfamily. In terms of assembly, homodimer. May form higher order oligomers. The cofactor is Mn(2+). It depends on prenylated FMN as a cofactor.

The protein localises to the cytoplasm. The catalysed reaction is (E)-4-coumarate + H(+) = 4-vinylphenol + CO2. It carries out the reaction (E)-cinnamate + H(+) = styrene + CO2. The enzyme catalyses (E)-ferulate + H(+) = 2-methoxy-4-vinylphenol + CO2. In terms of biological role, catalyzes the reversible decarboxylation of aromatic carboxylic acids like ferulic acid, p-coumaric acid or cinnamic acid, producing the corresponding vinyl derivatives 4-vinylphenol, 4-vinylguaiacol, and styrene, respectively, which play the role of aroma metabolites. This is Ferulic acid decarboxylase 1 from Aspergillus niger (strain ATCC MYA-4892 / CBS 513.88 / FGSC A1513).